A 167-amino-acid chain; its full sequence is Epithelial membrane protein 2 (167 aa).

Residues 1–21 (MLVLLAFIIAFHITSAALLFI) traverse the membrane as a helical segment. Asn-44, Asn-47, and Asn-52 each carry an N-linked (GlcNAc...) asparagine glycan. A run of 3 helical transmembrane segments spans residues 67–87 (TMIL…LQLF), 95–115 (FVLT…AASI), and 143–163 (YILA…YLIL).

This sequence belongs to the PMP-22/EMP/MP20 family. As to quaternary structure, interacts with PTK2; regulates PTK2 activation and localization. Interacts with ITGB3; regulates the levels of the heterodimer ITGA5-ITGB3 integrin surface expression. Interacts with P2RX7 (via C-terminus). Interacts with ITGB1; the interaction may be direct or indirect and ITGB1 has a heterodimer form.

It is found in the golgi apparatus membrane. It localises to the cell membrane. The protein localises to the apical cell membrane. The protein resides in the membrane raft. Its subcellular location is the cytoplasm. It is found in the nucleus. It localises to the perinuclear region. In terms of biological role, functions as a key regulator of cell membrane composition by regulating protein surface expression. Also, plays a role in regulation of processes including cell migration, cell proliferation, cell contraction and cell adhesion. Regulates transepithelial migration of neutrophils into the alveolar lumen, potentially via mediation of cell surface expression of adhesion markers and lipid raft formation. Negatively regulates caveolae formation by reducing CAV1 expression and CAV1 amount by increasing lysosomal degradation. Facilitates surface trafficking and the formation of lipid rafts bearing GPI-anchor proteins. Regulates surface expression of MHC1 and ICAM1 proteins increasing susceptibility to T-cell mediated cytotoxicity. Regulates the plasma membrane expression of the integrin heterodimers ITGA6-ITGB1, ITGA5-ITGB3 and ITGA5-ITGB1 resulting in modulation of cell-matrix adhesion. Also regulates many processes through PTK2. Regulates blood vessel endothelial cell migration and angiogenesis by regulating VEGF protein expression through PTK2 activation. Regulates cell migration and cell contraction through PTK2 and SRC activation. Regulates focal adhesion density, F-actin conformation and cell adhesion capacity through interaction with PTK2. Positively regulates cell proliferation. Plays a role during cell death and cell blebbing. Promotes angiogenesis and vasculogenesis through induction of VEGFA via a HIF1A-dependent pathway. Also plays a role in embryo implantation by regulating surface trafficking of integrin heterodimer ITGA5-ITGB3. Plays a role in placental angiogenesis and uterine natural killer cell regulation at the maternal-fetal placental interface, however not required in the maternal tissues for a viable pregnancy. Involved in the early stages of embryogenic development and cardiogenesis, potentially via regulation of epithelial-mesenchymal transition timing. May play a role in glomerular filtration. The sequence is that of Epithelial membrane protein 2 (EMP2) from Pan troglodytes (Chimpanzee).